Reading from the N-terminus, the 440-residue chain is ATP-dependent RNA helicase sub2 (440 aa).

The span at 1 to 16 shows a compositional bias: acidic residues; it reads MSHEEDLIDYSDEELQ. Residues 1 to 42 form a disordered region; it reads MSHEEDLIDYSDEELQTTDAAATTAAPASNGEAKKGDLTVSG. Low complexity predominate over residues 17 to 28; that stretch reads TTDAAATTAAPA. The Q motif motif lies at 57 to 85; the sequence is TGFRDFLLKEELLRAITDCGFEHPSEVQQ. Residues 88–263 form the Helicase ATP-binding domain; the sequence is IPTAILNVDV…KKFMRNPLEV (176 aa). 101-108 lines the ATP pocket; sequence AKSGLGKT. A DEAD box motif is present at residues 210–213; the sequence is DECD. The Helicase C-terminal domain maps to 291–436; sequence KLNELLDSLE…EYPEGGVDSS (146 aa).

This sequence belongs to the DEAD box helicase family. DECD subfamily.

It is found in the nucleus. It carries out the reaction ATP + H2O = ADP + phosphate + H(+). ATP-binding RNA helicase involved in transcription elongation and required for the export of mRNA out of the nucleus. SUB2 also plays a role in pre-mRNA splicing and spliceosome assembly. May be involved in rDNA and telomeric silencing, and maintenance of genome integrity. The polypeptide is ATP-dependent RNA helicase sub2 (sub2) (Aspergillus niger (strain ATCC MYA-4892 / CBS 513.88 / FGSC A1513)).